We begin with the raw amino-acid sequence, 420 residues long: Probable 3-isopropylmalate dehydratase large subunit (420 aa).

[4Fe-4S] cluster contacts are provided by Cys301, Cys361, and Cys364.

This sequence belongs to the aconitase/IPM isomerase family. LeuC type 2 subfamily. Heterodimer of LeuC and LeuD. It depends on [4Fe-4S] cluster as a cofactor.

The catalysed reaction is (2R,3S)-3-isopropylmalate = (2S)-2-isopropylmalate. It functions in the pathway amino-acid biosynthesis; L-leucine biosynthesis; L-leucine from 3-methyl-2-oxobutanoate: step 2/4. Catalyzes the isomerization between 2-isopropylmalate and 3-isopropylmalate, via the formation of 2-isopropylmaleate. In Methanosarcina mazei (strain ATCC BAA-159 / DSM 3647 / Goe1 / Go1 / JCM 11833 / OCM 88) (Methanosarcina frisia), this protein is Probable 3-isopropylmalate dehydratase large subunit.